A 403-amino-acid polypeptide reads, in one-letter code: Argininosuccinate synthase (403 aa).

Residues 12–20 and alanine 39 each bind ATP; that span reads AYSGGLDTS. Positions 90 and 95 each coordinate L-citrulline. Glycine 120 serves as a coordination point for ATP. Residues threonine 122, asparagine 126, and aspartate 127 each contribute to the L-aspartate site. Asparagine 126 provides a ligand contact to L-citrulline. 5 residues coordinate L-citrulline: arginine 130, serine 182, serine 191, glutamate 267, and tyrosine 279.

The protein belongs to the argininosuccinate synthase family. Type 1 subfamily. Homotetramer.

It localises to the cytoplasm. It carries out the reaction L-citrulline + L-aspartate + ATP = 2-(N(omega)-L-arginino)succinate + AMP + diphosphate + H(+). Its pathway is amino-acid biosynthesis; L-arginine biosynthesis; L-arginine from L-ornithine and carbamoyl phosphate: step 2/3. The chain is Argininosuccinate synthase from Ruthia magnifica subsp. Calyptogena magnifica.